Here is a 122-residue protein sequence, read N- to C-terminus: Urocortin (122 aa).

The N-terminal stretch at 1–25 (MRQRGRATLLVALLLLVQLRPESSQ) is a signal peptide. The propeptide occupies 26 to 80 (WSPAAAAANVVQDPNLRWNPGVRNQGGGVRALLLLLAERFPRRAGSEPAGERQRR). Val-120 is subject to Valine amide.

This sequence belongs to the sauvagine/corticotropin-releasing factor/urotensin I family. Interacts with CRHR1 and CRHR2 (via their N-terminal extracellular domain).

It localises to the secreted. Acts in vitro to stimulate the secretion of adrenocorticotropic hormone (ACTH). Binds with high affinity to CRF receptor types 1, 2-alpha, and 2-beta. Plays a role in the establishment of normal hearing thresholds. Reduces food intake and regulates ghrelin levels in gastric body and plasma. The sequence is that of Urocortin (Ucn) from Rattus norvegicus (Rat).